The following is a 307-amino-acid chain: MDSPHIPVLLKPVLNSFKDIKNGTILDCTLGYGGHSEAILISNPNLKIIACDRDSESLSFCKAKFEKYSDRIKIYKSNFAGILNKIDHEDIRGILADIGVSSLQLDLDERGFSINSNNLDMRMDKNQTFSAKELINSYSKDQLADIFYKYAELPNAKSLAQKIVDARDKSPIKSAKELSSIIGRSNLKNRSVSIAILAFQAIRIEVNKELDELNNLLNLIKSSKINNAILDIISFHSLEDKIAKSTFKEWEKSCICDNFVMKCECGNNHSIGKILTKKPITPSEDEIKQNPRSSCAKMRIFHIQRNV.

S-adenosyl-L-methionine contacts are provided by residues Gly33–His35, Asp52, Leu83, Asp97, and Gln104.

It belongs to the methyltransferase superfamily. RsmH family.

The protein resides in the cytoplasm. It catalyses the reaction cytidine(1402) in 16S rRNA + S-adenosyl-L-methionine = N(4)-methylcytidine(1402) in 16S rRNA + S-adenosyl-L-homocysteine + H(+). Its function is as follows. Specifically methylates the N4 position of cytidine in position 1402 (C1402) of 16S rRNA. In Campylobacter fetus subsp. fetus (strain 82-40), this protein is Ribosomal RNA small subunit methyltransferase H.